A 320-amino-acid polypeptide reads, in one-letter code: Lipoyl synthase (320 aa).

The [4Fe-4S] cluster site is built by C67, C72, C78, C93, C97, C100, and S307. Positions 79–296 constitute a Radical SAM core domain; that stretch reads FNHGTATFMI…REKANEMGFE (218 aa).

It belongs to the radical SAM superfamily. Lipoyl synthase family. The cofactor is [4Fe-4S] cluster.

It localises to the cytoplasm. The catalysed reaction is [[Fe-S] cluster scaffold protein carrying a second [4Fe-4S](2+) cluster] + N(6)-octanoyl-L-lysyl-[protein] + 2 oxidized [2Fe-2S]-[ferredoxin] + 2 S-adenosyl-L-methionine + 4 H(+) = [[Fe-S] cluster scaffold protein] + N(6)-[(R)-dihydrolipoyl]-L-lysyl-[protein] + 4 Fe(3+) + 2 hydrogen sulfide + 2 5'-deoxyadenosine + 2 L-methionine + 2 reduced [2Fe-2S]-[ferredoxin]. The protein operates within protein modification; protein lipoylation via endogenous pathway; protein N(6)-(lipoyl)lysine from octanoyl-[acyl-carrier-protein]: step 2/2. Its function is as follows. Catalyzes the radical-mediated insertion of two sulfur atoms into the C-6 and C-8 positions of the octanoyl moiety bound to the lipoyl domains of lipoate-dependent enzymes, thereby converting the octanoylated domains into lipoylated derivatives. The polypeptide is Lipoyl synthase (Glaesserella parasuis serovar 5 (strain SH0165) (Haemophilus parasuis)).